An 89-amino-acid chain; its full sequence is Cell division topological specificity factor (89 aa).

This sequence belongs to the MinE family.

In terms of biological role, prevents the cell division inhibition by proteins MinC and MinD at internal division sites while permitting inhibition at polar sites. This ensures cell division at the proper site by restricting the formation of a division septum at the midpoint of the long axis of the cell. This chain is Cell division topological specificity factor, found in Janthinobacterium sp. (strain Marseille) (Minibacterium massiliensis).